Here is a 128-residue protein sequence, read N- to C-terminus: Large ribosomal subunit protein uL22 (128 aa).

Belongs to the universal ribosomal protein uL22 family. Part of the 50S ribosomal subunit.

Functionally, this protein binds specifically to 23S rRNA; its binding is stimulated by other ribosomal proteins, e.g. L4, L17, and L20. It is important during the early stages of 50S assembly. It makes multiple contacts with different domains of the 23S rRNA in the assembled 50S subunit and ribosome. In terms of biological role, the globular domain of the protein is located near the polypeptide exit tunnel on the outside of the subunit, while an extended beta-hairpin is found that lines the wall of the exit tunnel in the center of the 70S ribosome. This is Large ribosomal subunit protein uL22 from Prochlorococcus marinus (strain MIT 9515).